The following is a 387-amino-acid chain: Protein adenylyltransferase VopS (387 aa).

ATP contacts are provided by residues 76-77, 122-124, 353-355, and Arg359; these read IT, LDS, and GNG. In terms of domain architecture, Fido spans 278-387; it reads LNMDNLKELH…NAENSLHGIK (110 aa).

Its subcellular location is the secreted. It carries out the reaction L-tyrosyl-[protein] + ATP = O-(5'-adenylyl)-L-tyrosyl-[protein] + diphosphate. It catalyses the reaction L-threonyl-[protein] + ATP = 3-O-(5'-adenylyl)-L-threonyl-[protein] + diphosphate. In terms of biological role, adenylyltransferase involved in virulence by mediating the addition of adenosine 5'-monophosphate (AMP) to specific threonine residue of host Rho GTPases RhoA, Rac and Cdc42. The resulting AMPylation prevents the interaction of Rho GTPases with downstream effectors, thereby inhibiting actin assembly in infected cells. The polypeptide is Protein adenylyltransferase VopS (vopS) (Vibrio parahaemolyticus serotype O3:K6 (strain RIMD 2210633)).